The sequence spans 480 residues: MIRAAPPPLFLLLLLLLLLVSWASRGEAAPDQDEIQRLPGLAKQPSFRQYSGYLKGSGSKHLHYWFVESQKDPENSPVVLWLNGGPGCSSLDGLLTEHGPFLVQPDGVTLEYNPYSWNLIANVLYLESPAGVGFSYSDDKFYATNDTEVAQSNFEALQDFFRLFPEYKNNKLFLTGESYAGIYIPTLAVLVMQDPSMNLQGLAVGNGLSSYEQNDNSLVYFAYYHGLLGNRLWSSLQTHCCSQNKCNFYDNKDLECVTNLQEVARIVGNSGLNIYNLYAPCAGGVPSHFRYEKDTVVVQDLGNIFTRLPLKRMWHQALLRSGDKVRMDPPCTNTTAASTYLNNPYVRKALNIPEQLPQWDMCNFLVNLQYRRLYRSMNSQYLKLLSSQKYQILLYNGDVDMACNFMGDEWFVDSLNQKMEVQRRPWLVKYGDSGEQIAGFVKEFSHIAFLTIKGAGHMVPTDKPLAAFTMFSRFLNKQPY.

Residues 1–28 (MIRAAPPPLFLLLLLLLLLVSWASRGEA) form the signal peptide. Intrachain disulfides connect Cys88–Cys362, Cys240–Cys256, Cys241–Cys246, and Cys281–Cys331. N-linked (GlcNAc...) asparagine glycosylation occurs at Asn145. Ser178 is a catalytic residue. Asn333 is a glycosylation site (N-linked (GlcNAc...) asparagine). Residues Asp400 and His457 contribute to the active site.

It belongs to the peptidase S10 family. In terms of assembly, heterodimer of a 32 kDa chain and a 20 kDa chain; disulfide-linked.

It is found in the lysosome. It carries out the reaction Release of a C-terminal amino acid with broad specificity.. Functionally, protective protein appears to be essential for both the activity of beta-galactosidase and neuraminidase, it associates with these enzymes and exerts a protective function necessary for their stability and activity. This protein is also a carboxypeptidase and can deamidate tachykinins. In Homo sapiens (Human), this protein is Lysosomal protective protein (CTSA).